Here is a 272-residue protein sequence, read N- to C-terminus: Ethanolamine ammonia-lyase small subunit (272 aa).

Adenosylcob(III)alamin contacts are provided by V161, E182, and C211.

This sequence belongs to the EutC family. The basic unit is a heterodimer which dimerizes to form tetramers. The heterotetramers trimerize; 6 large subunits form a core ring with 6 small subunits projecting outwards. Adenosylcob(III)alamin serves as cofactor.

Its subcellular location is the bacterial microcompartment. It catalyses the reaction ethanolamine = acetaldehyde + NH4(+). It participates in amine and polyamine degradation; ethanolamine degradation. In terms of biological role, catalyzes the deamination of various vicinal amino-alcohols to oxo compounds. Allows this organism to utilize ethanolamine as the sole source of nitrogen and carbon in the presence of external vitamin B12. The protein is Ethanolamine ammonia-lyase small subunit of Xanthomonas campestris pv. campestris (strain ATCC 33913 / DSM 3586 / NCPPB 528 / LMG 568 / P 25).